Consider the following 82-residue polypeptide: Small ribosomal subunit protein bS16 (82 aa).

The protein belongs to the bacterial ribosomal protein bS16 family.

The protein is Small ribosomal subunit protein bS16 of Haemophilus ducreyi (strain 35000HP / ATCC 700724).